The following is a 103-amino-acid chain: Nucleoid-associated protein Anae109_3761 (103 aa).

It belongs to the YbaB/EbfC family. As to quaternary structure, homodimer.

The protein localises to the cytoplasm. The protein resides in the nucleoid. In terms of biological role, binds to DNA and alters its conformation. May be involved in regulation of gene expression, nucleoid organization and DNA protection. The polypeptide is Nucleoid-associated protein Anae109_3761 (Anaeromyxobacter sp. (strain Fw109-5)).